The sequence spans 328 residues: Solute-binding protein Bamb_6123 (328 aa).

A signal peptide spans 1–26 (MTHRFPRSRTALAVALMAGFAMSAQA). Residues H35, E73, R89, R149, N209, and E236 each coordinate beta-D-galacturonate. The beta-D-glucuronate site is built by H35, E73, R89, R149, N209, and E236.

The protein belongs to the bacterial solute-binding protein 7 family. In terms of assembly, the complex is comprised of an extracytoplasmic solute-binding protein and a heteromeric permease formed by two transmembrane proteins.

Its subcellular location is the periplasm. Functionally, solute-binding protein that binds D-galacturonate and D-glucuronate (in vitro). Probably part of a tripartite ATP-independent periplasmic (TRAP) transport system that mediates solute transport into the cytoplasm. This is Solute-binding protein Bamb_6123 from Burkholderia ambifaria (strain ATCC BAA-244 / DSM 16087 / CCUG 44356 / LMG 19182 / AMMD) (Burkholderia cepacia (strain AMMD)).